An 83-amino-acid chain; its full sequence is Cell division topological specificity factor (83 aa).

It belongs to the MinE family.

Functionally, prevents the cell division inhibition by proteins MinC and MinD at internal division sites while permitting inhibition at polar sites. This ensures cell division at the proper site by restricting the formation of a division septum at the midpoint of the long axis of the cell. This Buchnera aphidicola subsp. Acyrthosiphon pisum (strain 5A) protein is Cell division topological specificity factor.